The following is a 193-amino-acid chain: Peptidyl-tRNA hydrolase (193 aa).

Tyr17 is a binding site for tRNA. The active-site Proton acceptor is the His22. TRNA-binding residues include Tyr68, Asn70, and Asn116.

This sequence belongs to the PTH family. As to quaternary structure, monomer.

Its subcellular location is the cytoplasm. The enzyme catalyses an N-acyl-L-alpha-aminoacyl-tRNA + H2O = an N-acyl-L-amino acid + a tRNA + H(+). In terms of biological role, hydrolyzes ribosome-free peptidyl-tRNAs (with 1 or more amino acids incorporated), which drop off the ribosome during protein synthesis, or as a result of ribosome stalling. Catalyzes the release of premature peptidyl moieties from peptidyl-tRNA molecules trapped in stalled 50S ribosomal subunits, and thus maintains levels of free tRNAs and 50S ribosomes. In Acinetobacter baumannii (strain AB0057), this protein is Peptidyl-tRNA hydrolase.